The chain runs to 150 residues: Large ribosomal subunit protein eL19 (150 aa).

The segment at S59–M89 is disordered. Over residues Y61–M89 the composition is skewed to basic residues.

It belongs to the eukaryotic ribosomal protein eL19 family. In terms of assembly, part of the 50S ribosomal subunit.

Its function is as follows. Binds to the 23S rRNA. This chain is Large ribosomal subunit protein eL19, found in Pyrococcus horikoshii (strain ATCC 700860 / DSM 12428 / JCM 9974 / NBRC 100139 / OT-3).